Here is a 375-residue protein sequence, read N- to C-terminus: Alcohol dehydrogenase 1 (375 aa).

Ser2 bears the N-acetylserine mark. 7 residues coordinate Zn(2+): Cys47, His68, Cys98, Cys101, Cys104, Cys112, and Cys175. NAD(+) is bound by residues 200 to 205, Asp224, and Lys229; that span reads WSGRVG. Lys234 carries the N6-succinyllysine modification. An NAD(+)-binding site is contributed by 293 to 295; sequence VGV. An N6-succinyllysine modification is found at Lys340. Arg370 lines the NAD(+) pocket.

This sequence belongs to the zinc-containing alcohol dehydrogenase family. Class-I subfamily. Homodimer. Zn(2+) serves as cofactor.

The protein localises to the cytoplasm. The catalysed reaction is a primary alcohol + NAD(+) = an aldehyde + NADH + H(+). It carries out the reaction a secondary alcohol + NAD(+) = a ketone + NADH + H(+). The polypeptide is Alcohol dehydrogenase 1 (ADH1) (Geomys attwateri (Attwater's pocket gopher)).